Reading from the N-terminus, the 230-residue chain is Ribosome-recycling factor, mitochondrial (230 aa).

The N-terminal 24 residues, 1–24 (MILTTARLNCRPVTVPRLFNRSFS), are a transit peptide targeting the mitochondrion.

Belongs to the RRF family.

Its subcellular location is the mitochondrion. Functionally, necessary for protein synthesis in mitochondria. Functions as a ribosome recycling factor in mitochondria. This Saccharomyces cerevisiae (strain ATCC 204508 / S288c) (Baker's yeast) protein is Ribosome-recycling factor, mitochondrial (RRF1).